Consider the following 184-residue polypeptide: Peptide deformylase (184 aa).

Residues Cys-98 and His-140 each contribute to the Fe cation site. Glu-141 is an active-site residue. Residue His-144 participates in Fe cation binding.

It belongs to the polypeptide deformylase family. Requires Fe(2+) as cofactor.

It carries out the reaction N-terminal N-formyl-L-methionyl-[peptide] + H2O = N-terminal L-methionyl-[peptide] + formate. In terms of biological role, removes the formyl group from the N-terminal Met of newly synthesized proteins. Requires at least a dipeptide for an efficient rate of reaction. N-terminal L-methionine is a prerequisite for activity but the enzyme has broad specificity at other positions. This Bacteroides fragilis (strain ATCC 25285 / DSM 2151 / CCUG 4856 / JCM 11019 / LMG 10263 / NCTC 9343 / Onslow / VPI 2553 / EN-2) protein is Peptide deformylase.